Consider the following 691-residue polypeptide: Lipase 2 (691 aa).

An N-terminal signal peptide occupies residues 1–37; it reads MLRGQEERKYSIRKYSIGVVSVLAATMFVVSSHEAQA. The span at 34-72 shows a compositional bias: polar residues; it reads EAQASEKTPTSNAAAQKETLNQPGEQGNAITSHQMQSGK. A disordered region spans residues 34-267; sequence EAQASEKTPT…KPTDKNTDNK (234 aa). A propeptide spanning residues 38-296 is cleaved from the precursor; that stretch reads SEKTPTSNAA…ADAKKVRPLK (259 aa). The segment covering 73–82 has biased composition (basic and acidic residues); the sequence is QLDDMHKENG. 3 stretches are compositionally biased toward polar residues: residues 83–115, 125–172, and 186–207; these read KSGT…NDNQ, SKQS…QPSI, and PTST…AQDA. 2 stretches are compositionally biased toward basic and acidic residues: residues 226–238 and 258–267; these read IDAK…RQSE and KPTDKNTDNK. The active-site Nucleophile is Ser413. Gly580 contacts Ca(2+). The Charge relay system role is filled by Asp604. Asp645 serves as a coordination point for Ca(2+). The active-site Charge relay system is the His646. Asp648, Asp653, and Asp656 together coordinate Ca(2+).

The protein belongs to the AB hydrolase superfamily. Lipase family.

Its subcellular location is the secreted. It catalyses the reaction a triacylglycerol + H2O = a diacylglycerol + a fatty acid + H(+). In Staphylococcus aureus (strain Mu50 / ATCC 700699), this protein is Lipase 2 (lip2).